The following is a 210-amino-acid chain: 3-phospho-D-glycerate guanylyltransferase (210 aa).

Belongs to the CofC family.

It carries out the reaction (2R)-3-phosphoglycerate + GTP + H(+) = 3-[(R)-glyceryl]-diphospho-5'-guanosine + diphosphate. It functions in the pathway cofactor biosynthesis; coenzyme F420 biosynthesis. In terms of biological role, guanylyltransferase that catalyzes the activation of (2R)-3-phosphoglycerate (3PG) as 3-[(R)-glyceryl]-diphospho-5'-guanosine, via the condensation of 3PG with GTP. It is involved in the biosynthesis of a derivative of the hydride carrier cofactor coenzyme F420, 3PG-F420. In Colwellia psychrerythraea (strain 34H / ATCC BAA-681) (Vibrio psychroerythus), this protein is 3-phospho-D-glycerate guanylyltransferase.